Here is a 217-residue protein sequence, read N- to C-terminus: Thiosulfate dehydrogenase electron acceptor (217 aa).

A signal peptide spans 1–28 (MRQFIPMRRVLAVATLGALFWAAPASWA). Cytochrome c domains lie at 29-104 (AAPP…SKLK) and 116-206 (AAAA…AAQP). Residues Cys37, Cys40, His41, Cys137, Cys140, and His141 each contribute to the heme c site.

In terms of processing, binds 2 heme c groups covalently per subunit.

Acts as an electron acceptor for the thiosulfate dehydrogenase TsdA. This Thiomonas intermedia (strain K12) (Thiobacillus intermedius) protein is Thiosulfate dehydrogenase electron acceptor (tsdB).